The following is a 272-amino-acid chain: Glucosyl-3-phosphoglycerate/mannosyl-3-phosphoglycerate phosphatase (272 aa).

The active-site Nucleophile is D8. Residues D8, D10, and D214 each coordinate Mg(2+).

The protein belongs to the HAD-like hydrolase superfamily. MPGP family. In terms of assembly, monomer. The cofactor is Co(2+). Mg(2+) serves as cofactor. Ni(2+) is required as a cofactor.

The enzyme catalyses (2R)-2-O-(alpha-D-glucopyranosyl)-3-phospho-glycerate + H2O = (2R)-2-O-(alpha-D-glucopyranosyl)-glycerate + phosphate. It carries out the reaction 2-O-(alpha-D-mannosyl)-3-phosphoglycerate + H2O = (2R)-2-O-(alpha-D-mannosyl)-glycerate + phosphate. In terms of biological role, involved in the biosynthesis of glucosylglycerate. Catalyzes the dephosphorylation of glucosyl-3-phosphoglycerate (GPG) and mannosyl-3-phosphoglycerate (MPG) to glucosylglycerate (GG) and mannosylglycerate (MG), respectively. The protein is Glucosyl-3-phosphoglycerate/mannosyl-3-phosphoglycerate phosphatase of Methanococcoides burtonii (strain DSM 6242 / NBRC 107633 / OCM 468 / ACE-M).